A 295-amino-acid polypeptide reads, in one-letter code: sn-glycerol-3-phosphate transport system permease protein UgpA (295 aa).

Over 1-11 the chain is Cytoplasmic; the sequence is MSSSRPVFRSR. Residues 12–32 traverse the membrane as a helical segment; sequence WLPYLLVAPQLIITVIFFIWP. The Periplasmic segment spans residues 33–80; sequence AGEALWYSLQSVDPFGFSSQFVGLDNFVTLFHDSYYLDSFWTTIKFST. The region spanning 76–284 is the ABC transmembrane type-1 domain; the sequence is IKFSTFVTVS…FLVIVLTVVQ (209 aa). Residues 81–101 traverse the membrane as a helical segment; that stretch reads FVTVSGLLVSLFFAALVEYIV. The Cytoplasmic segment spans residues 102-109; that stretch reads RGSRFYQT. Residues 110-130 traverse the membrane as a helical segment; it reads LMLLPYAVAPAVAAVLWIFLF. Over 131-156 the chain is Periplasmic; it reads NPGRGLITHFLAEFGYDWNHAQNSGQ. Residues 157-177 traverse the membrane as a helical segment; the sequence is AMFLVVFASVWKQISYNFLFF. Over 178-207 the chain is Cytoplasmic; sequence YAALQSIPRSLIEAAAIDGAGPIRRFFKIA. The helical transmembrane segment at 208 to 228 threads the bilayer; that stretch reads LPLIAPVSFFLLVVNLVYAFF. At 229–262 the chain is on the periplasmic side; it reads DTFPVIDAATSGGPVQATTTLIYKIYREGFTGLD. The chain crosses the membrane as a helical span at residues 263–283; sequence LASSAAQSMVLMFLVIVLTVV. Over 284–295 the chain is Cytoplasmic; the sequence is QFRYVESKVRYQ.

This sequence belongs to the binding-protein-dependent transport system permease family. UgpAE subfamily. In terms of assembly, the complex is composed of two ATP-binding proteins (UgpC), two transmembrane proteins (UgpA and UgpE) and a solute-binding protein (UgpB).

It localises to the cell inner membrane. In terms of biological role, part of the ABC transporter complex UgpBAEC involved in sn-glycerol-3-phosphate (G3P) import. Probably responsible for the translocation of the substrate across the membrane. The polypeptide is sn-glycerol-3-phosphate transport system permease protein UgpA (ugpA) (Shigella flexneri).